The chain runs to 523 residues: Arylsulfatase K (523 aa).

A signal peptide spans 1-16; it reads MLRVFVLLIFNVNAYC. The Ca(2+) site is built by Asp35 and Cys75. Cys75 serves as the catalytic Nucleophile. Cys75 carries the 3-oxoalanine (Cys) modification. Asn103 is a glycosylation site (N-linked (GlcNAc...) asparagine). Lys123 and His246 together coordinate substrate. Asn257 carries N-linked (GlcNAc...) asparagine glycosylation. The Ca(2+) site is built by Asp308 and His309. A glycan (N-linked (GlcNAc...) asparagine) is linked at Asn405.

The protein belongs to the sulfatase family. The cofactor is Ca(2+). Post-translationally, the conversion to 3-oxoalanine (also known as C-formylglycine, FGly), of a serine or cysteine residue in prokaryotes and of a cysteine residue in eukaryotes, is critical for catalytic activity.

The protein resides in the secreted. Its subcellular location is the lysosome. It catalyses the reaction an aryl sulfate + H2O = a phenol + sulfate + H(+). It carries out the reaction Hydrolysis of the 2-sulfate groups of the 2-O-sulfo-D-glucuronate residues of chondroitin sulfate, heparin and heparitin sulfate.. In terms of biological role, catalyzes the hydrolysis of pseudosubstrates such as p-nitrocatechol sulfate and p-nitrophenyl sulfate. Catalyzes the hydrolysis of the 2-sulfate groups of the 2-O-sulfo-D-glucuronate residues of chondroitin sulfate, heparin and heparitin sulfate. Acts selectively on 2-sulfoglucuronate and lacks activity against 2-sulfoiduronate. The sequence is that of Arylsulfatase K (arsk) from Danio rerio (Zebrafish).